An 897-amino-acid polypeptide reads, in one-letter code: Zinc finger protein zas1 (897 aa).

2 C2H2-type zinc fingers span residues 26-50 (FYCTYPDCPKSFTRKEHLRRHERTH) and 56-79 (FSCSFCNRAFARSDVLNRHVQQMH). A C2H2-type 3; atypical zinc finger spans residues 93 to 119 (ASCFLGFCVLAHDYVNLINARHFMIEH).

The protein localises to the nucleus. This is Zinc finger protein zas1 (zas1) from Schizosaccharomyces pombe (strain 972 / ATCC 24843) (Fission yeast).